A 388-amino-acid polypeptide reads, in one-letter code: Lipoyl synthase, mitochondrial (388 aa).

A mitochondrion-targeting transit peptide spans 1–18 (MRLTTVQRRFLVSTKAKV). A compositionally biased stretch (low complexity) spans 22–39 (SISSTANTGSASAGAPNG). Residues 22–43 (SISSTANTGSASAGAPNGQTRR) are disordered. [4Fe-4S] cluster contacts are provided by Cys-120, Cys-125, Cys-131, Cys-151, Cys-155, Cys-158, and Ser-366. Residues 134-355 (GKDKSKATAT…KDKAKEMGFL (222 aa)) enclose the Radical SAM core domain.

Belongs to the radical SAM superfamily. Lipoyl synthase family. [4Fe-4S] cluster is required as a cofactor.

Its subcellular location is the mitochondrion. The enzyme catalyses [[Fe-S] cluster scaffold protein carrying a second [4Fe-4S](2+) cluster] + N(6)-octanoyl-L-lysyl-[protein] + 2 oxidized [2Fe-2S]-[ferredoxin] + 2 S-adenosyl-L-methionine + 4 H(+) = [[Fe-S] cluster scaffold protein] + N(6)-[(R)-dihydrolipoyl]-L-lysyl-[protein] + 4 Fe(3+) + 2 hydrogen sulfide + 2 5'-deoxyadenosine + 2 L-methionine + 2 reduced [2Fe-2S]-[ferredoxin]. The protein operates within protein modification; protein lipoylation via endogenous pathway; protein N(6)-(lipoyl)lysine from octanoyl-[acyl-carrier-protein]: step 2/2. In terms of biological role, catalyzes the radical-mediated insertion of two sulfur atoms into the C-6 and C-8 positions of the octanoyl moiety bound to the lipoyl domains of lipoate-dependent enzymes, thereby converting the octanoylated domains into lipoylated derivatives. This is Lipoyl synthase, mitochondrial from Candida glabrata (strain ATCC 2001 / BCRC 20586 / JCM 3761 / NBRC 0622 / NRRL Y-65 / CBS 138) (Yeast).